The primary structure comprises 624 residues: Iron transport multicopper oxidase FET3 (624 aa).

A signal peptide spans 1–20 (MRTFLSSFIILTTFLASLIA). Residues 21-555 (AETHTWYFKT…KRLPTGFTTK (535 aa)) are Extracellular-facing. Plastocyanin-like domains follow at residues 46–144 (IGFN…FIIE) and 190–292 (NFLF…LQVN). N-linked (GlcNAc...) asparagine glycans are attached at residues Asn49 and Asn77. 2 residues coordinate Cu cation: His81 and His83. The N-linked (GlcNAc...) asparagine glycan is linked to Asn113. Residues His126 and His128 each contribute to the Cu cation site. N-linked (GlcNAc...) asparagine glycosylation is found at Asn194, Asn198, Asn244, Asn265, Asn292, Asn300, and Asn359. A Plastocyanin-like 3 domain is found at 382 to 499 (NELIYGTNTN…QGLAVVLIED (118 aa)). 3 residues coordinate Cu cation: His413, His416, and His418. Residue Asn441 is glycosylated (N-linked (GlcNAc...) asparagine). His481, Cys482, His483, and His487 together coordinate Cu cation. The helical transmembrane segment at 556–576 (GIVALVFSCVAAFLGLFSFSF) threads the bilayer. Topologically, residues 577 to 624 (YGMNDIAHVEDKVARDLDIDLEAENEDEEEAVVLNQNSSSSDSNSKPH) are cytoplasmic. Positions 603 to 624 (DEEEAVVLNQNSSSSDSNSKPH) are disordered. A compositionally biased stretch (low complexity) spans 608 to 624 (VVLNQNSSSSDSNSKPH).

This sequence belongs to the multicopper oxidase family. Cu cation is required as a cofactor.

The protein resides in the cell membrane. Iron transport multicopper ferroxidase required for Fe(2+) high affinity uptake. Required to oxidize Fe(2+) and release it from the transporter. Essential component of copper-dependent iron transport. In Candida albicans (Yeast), this protein is Iron transport multicopper oxidase FET3 (FET3).